Reading from the N-terminus, the 219-residue chain is GTP cyclohydrolase-2 (219 aa).

R51 to E55 serves as a coordination point for GTP. 3 residues coordinate Zn(2+): C56, C67, and C69. GTP contacts are provided by residues Q72, E94–R96, and T116. The Proton acceptor role is filled by D128. Residue R130 is the Nucleophile of the active site. 2 residues coordinate GTP: T151 and K156.

Belongs to the GTP cyclohydrolase II family. Requires Zn(2+) as cofactor.

The enzyme catalyses GTP + 4 H2O = 2,5-diamino-6-hydroxy-4-(5-phosphoribosylamino)-pyrimidine + formate + 2 phosphate + 3 H(+). It participates in cofactor biosynthesis; riboflavin biosynthesis; 5-amino-6-(D-ribitylamino)uracil from GTP: step 1/4. Functionally, catalyzes the conversion of GTP to 2,5-diamino-6-ribosylamino-4(3H)-pyrimidinone 5'-phosphate (DARP), formate and pyrophosphate. The chain is GTP cyclohydrolase-2 from Pasteurella multocida (strain Pm70).